Here is a 250-residue protein sequence, read N- to C-terminus: Probable transcriptional regulatory protein Lferr_0060 (250 aa).

It belongs to the TACO1 family.

The protein localises to the cytoplasm. This Acidithiobacillus ferrooxidans (strain ATCC 53993 / BNL-5-31) (Leptospirillum ferrooxidans (ATCC 53993)) protein is Probable transcriptional regulatory protein Lferr_0060.